We begin with the raw amino-acid sequence, 433 residues long: Methylenetetrahydrofolate--tRNA-(uracil-5-)-methyltransferase TrmFO (433 aa).

7–12 (GGGLAG) is a binding site for FAD.

This sequence belongs to the MnmG family. TrmFO subfamily. FAD is required as a cofactor.

It is found in the cytoplasm. The catalysed reaction is uridine(54) in tRNA + (6R)-5,10-methylene-5,6,7,8-tetrahydrofolate + NADH + H(+) = 5-methyluridine(54) in tRNA + (6S)-5,6,7,8-tetrahydrofolate + NAD(+). It catalyses the reaction uridine(54) in tRNA + (6R)-5,10-methylene-5,6,7,8-tetrahydrofolate + NADPH + H(+) = 5-methyluridine(54) in tRNA + (6S)-5,6,7,8-tetrahydrofolate + NADP(+). In terms of biological role, catalyzes the folate-dependent formation of 5-methyl-uridine at position 54 (M-5-U54) in all tRNAs. The chain is Methylenetetrahydrofolate--tRNA-(uracil-5-)-methyltransferase TrmFO from Natranaerobius thermophilus (strain ATCC BAA-1301 / DSM 18059 / JW/NM-WN-LF).